The chain runs to 303 residues: MFGKKNLKWLGVVATLMMTFVQLGGALVTKTGSADGCGSSWPLCHGALIPEFFPIDTIIELSHRAVSALSLLMVLWLVITAWKHIGYIKEIKPLSIISVGFLLLQALIGAAAVIWQQNDYVLALHFGISLISFSSVFLITLIIFSIDQKYEADELYIKKPLRRLTWLMAIIIYCGVYTGALVRHADASLAYGGWPLPFHDLVPHSEQDWVQLTHRIMAFIVFTIIMITYIHAVKNYPNNRTVHYGYTAAFILVILQVITGALSIMTNVNLIIALFHALFITYLFGMTTYFIMLMLRSVRSDKQ.

Over 1–8 (MFGKKNLK) the chain is Cytoplasmic. Residues 9-29 (WLGVVATLMMTFVQLGGALVT) traverse the membrane as a helical segment. Topologically, residues 30–67 (KTGSADGCGSSWPLCHGALIPEFFPIDTIIELSHRAVS) are extracellular. Cysteines 37 and 44 form a disulfide. Glu60 is an active-site residue. His63 provides a ligand contact to heme o. The helical transmembrane segment at 68–88 (ALSLLMVLWLVITAWKHIGYI) threads the bilayer. Over 89-93 (KEIKP) the chain is Cytoplasmic. A helical membrane pass occupies residues 94-114 (LSIISVGFLLLQALIGAAAVI). The Extracellular segment spans residues 115-125 (WQQNDYVLALH). Position 125 (His125) interacts with heme o. The chain crosses the membrane as a helical span at residues 126–146 (FGISLISFSSVFLITLIIFSI). Topologically, residues 147–163 (DQKYEADELYIKKPLRR) are cytoplasmic. A helical transmembrane segment spans residues 164–184 (LTWLMAIIIYCGVYTGALVRH). Topologically, residues 185–215 (ADASLAYGGWPLPFHDLVPHSEQDWVQLTHR) are extracellular. Residue His214 coordinates heme b. The chain crosses the membrane as a helical span at residues 216-236 (IMAFIVFTIIMITYIHAVKNY). The Cytoplasmic segment spans residues 237–244 (PNNRTVHY). A helical transmembrane segment spans residues 245–265 (GYTAAFILVILQVITGALSIM). Residues 266–270 (TNVNL) are Extracellular-facing. The chain crosses the membrane as a helical span at residues 271–291 (IIALFHALFITYLFGMTTYFI). His276 lines the heme b pocket. Residues 292–303 (MLMLRSVRSDKQ) lie on the Cytoplasmic side of the membrane.

It belongs to the COX15/CtaA family. Type 1 subfamily. In terms of assembly, interacts with CtaB. Requires heme b as cofactor.

The protein localises to the cell membrane. It carries out the reaction Fe(II)-heme o + 2 A + H2O = Fe(II)-heme a + 2 AH2. It participates in porphyrin-containing compound metabolism; heme A biosynthesis; heme A from heme O: step 1/1. In terms of biological role, catalyzes the conversion of heme O to heme A by two successive hydroxylations of the methyl group at C8. The first hydroxylation forms heme I, the second hydroxylation results in an unstable dihydroxymethyl group, which spontaneously dehydrates, resulting in the formyl group of heme A. The protein is Heme A synthase of Staphylococcus aureus (strain Mu3 / ATCC 700698).